A 651-amino-acid polypeptide reads, in one-letter code: Kinesin-like protein KIF22-A (651 aa).

The Kinesin motor domain occupies 31-359 (RVRVAVRLRP…LNFAAKSKQI (329 aa)). Position 116–123 (116–123 (GPTGAGKT)) interacts with ATP. A disordered region spans residues 366-413 (QETTQTVVQPAMKRPREETGHIAGSQKRKKSKNDSTESSPNSSMDTAG). Residues 401-410 (TESSPNSSMD) show a composition bias toward polar residues. The stretch at 452–498 (KRERMALLKKWEESQMEIERLKEKQKELEQKAMEAEARLEKSNNSDL) forms a coiled coil. The Important for regulated proteolytic degradation signature appears at 561–564 (GLEN).

The protein belongs to the TRAFAC class myosin-kinesin ATPase superfamily. Kinesin family. In terms of processing, ubiquitinated, leading to its subsequent proteasomal degradation.

The protein resides in the nucleus. The protein localises to the cytoplasm. It localises to the cytoskeleton. Kinesin family member that is involved in spindle formation and the movements of chromosomes during mitosis and meiosis. Binds to microtubules and to DNA. The sequence is that of Kinesin-like protein KIF22-A (kif22-a) from Xenopus laevis (African clawed frog).